The chain runs to 300 residues: MEEDGSDWGGLAPEILINIISRLTIQELWTGPMFVQKSWLTVCRDPYLWSIFDLEPWFDSYPESTHLWSPEFEQKVDLMLRSVVDWSEGGLTKIRVRHCSDHALSYAADRCPNLQVLAIRSSPNVTDASMTKIAFRCRSLKELDISYCHEISHDTLVMIGRNCPNLRILKRNLMDWSSRHIGSVPTEYLDACPQDGDTEADAIGKHMINLEHLEIQFSRLSVKGLASICEGCPKLEYLDLFGCVHLSSRDITSNVSRLKWLKEVKKPDVYVPRSGDVAQTERYGHWRLYDERFDIQAMRI.

The F-box; degenerate domain maps to 11–52 (LAPEILINIISRLTIQELWTGPMFVQKSWLTVCRDPYLWSIF).

In terms of assembly, part of a SCF (ASK-cullin-F-box) protein ligase complex. Interacts with SKP1A/ASK1 and SKP1B/ASK2.

It localises to the nucleus. It functions in the pathway protein modification; protein ubiquitination. Its function is as follows. Component of SCF(ASK-cullin-F-box) E3 ubiquitin ligase complexes, which may mediate the ubiquitination and subsequent proteasomal degradation of target proteins. This Arabidopsis thaliana (Mouse-ear cress) protein is F-box protein SKIP1 (SKIP1).